Consider the following 290-residue polypeptide: Phosphatidylserine decarboxylase proenzyme (290 aa).

Residues D96, H153, and S257 each act as charge relay system; for autoendoproteolytic cleavage activity in the active site. Catalysis depends on S257, which acts as the Schiff-base intermediate with substrate; via pyruvic acid; for decarboxylase activity. The residue at position 257 (S257) is a Pyruvic acid (Ser); by autocatalysis.

It belongs to the phosphatidylserine decarboxylase family. PSD-B subfamily. Prokaryotic type I sub-subfamily. As to quaternary structure, heterodimer of a large membrane-associated beta subunit and a small pyruvoyl-containing alpha subunit. Pyruvate is required as a cofactor. Is synthesized initially as an inactive proenzyme. Formation of the active enzyme involves a self-maturation process in which the active site pyruvoyl group is generated from an internal serine residue via an autocatalytic post-translational modification. Two non-identical subunits are generated from the proenzyme in this reaction, and the pyruvate is formed at the N-terminus of the alpha chain, which is derived from the carboxyl end of the proenzyme. The autoendoproteolytic cleavage occurs by a canonical serine protease mechanism, in which the side chain hydroxyl group of the serine supplies its oxygen atom to form the C-terminus of the beta chain, while the remainder of the serine residue undergoes an oxidative deamination to produce ammonia and the pyruvoyl prosthetic group on the alpha chain. During this reaction, the Ser that is part of the protease active site of the proenzyme becomes the pyruvoyl prosthetic group, which constitutes an essential element of the active site of the mature decarboxylase.

The protein localises to the cell membrane. The catalysed reaction is a 1,2-diacyl-sn-glycero-3-phospho-L-serine + H(+) = a 1,2-diacyl-sn-glycero-3-phosphoethanolamine + CO2. Its pathway is phospholipid metabolism; phosphatidylethanolamine biosynthesis; phosphatidylethanolamine from CDP-diacylglycerol: step 2/2. In terms of biological role, catalyzes the formation of phosphatidylethanolamine (PtdEtn) from phosphatidylserine (PtdSer). The polypeptide is Phosphatidylserine decarboxylase proenzyme (Haemophilus influenzae (strain ATCC 51907 / DSM 11121 / KW20 / Rd)).